The sequence spans 1789 residues: Genome polyprotein (1789 aa).

A disordered region spans residues 1–25 (MMMASKDVVPTAASSENANNNSSIK). Residues 1–183 (MMMASKDVVP…MCPLPPVDQR (183 aa)) form an interaction with host MAP1LC3A/LC3 region. Residues 12-23 (AASSENANNNSS) are compositionally biased toward low complexity. The tract at residues 184 to 398 (STTPATEPTI…ASLLPDFHLQ (215 aa)) is interaction with NTPase. The interaction with NS4 stretch occupies residues 301–398 (HPTQDWSRDT…ASLLPDFHLQ (98 aa)). Host ER membrane association stretches follow at residues 318–349 (KLEMVRDAVLAAINGLVSRPFKDLLGKLKPLN) and 360–398 (TFMGVVEMVVLLLELFGIFWNPPDVSNFIASLLPDFHLQ). The interaction with NS1-2 and NS4 and homooligomerization stretch occupies residues 399–574 (GPEDLARDLV…GKTKAAEHLA (176 aa)). Residues 532–697 (RISMARAALA…EHTRKVSPGD (166 aa)) form the SF3 helicase domain. 560–567 (GPPGIGKT) is an ATP binding site. Positions 651–756 (AIVITTNAPG…AVALTMERQD (106 aa)) are important for mitochondrion targeting. The tract at residues 826 to 832 (YIIESDG) is functions as endoplasmic reticulum export signal. Residues 865–910 (RAVAYASCFQSAITTILQMAGSALVINRAVKRMFGTRTAAMALEGP) are host membrane association. The disordered stretch occupies residues 958 to 981 (DAVPEGKNKGKTKKGRGRKNNYNA). Over residues 966–976 (KGKTKKGRGRK) the composition is skewed to basic residues. The tract at residues 989-994 (DEEYEE) is acidic. Position 992 is an O-(5'-phospho-RNA)-tyrosine (tyrosine 992). The interaction with host EIF4G stretch occupies residues 1084–1100 (WADDDREVDYNEKINFE). The region spanning 1101-1281 (APPTLWSRVT…QAGEGETALE (181 aa)) is the Peptidase C37 domain. Active-site for 3CLpro activity residues include histidine 1130, glutamate 1154, and cysteine 1239. The RdRp catalytic domain maps to 1516-1637 (KNHFDADYTA…STDIDFDPAR (122 aa)). Mg(2+)-binding residues include aspartate 1520, aspartate 1522, aspartate 1624, and glutamate 1625.

As to quaternary structure, homodimer. Homooligomer. Interacts with NTPase; this interaction increases the proapoptotic activity of the NTPase and is crucial for the formation of the viral replication complex. Interacts with NS4; this interaction is crucial for the formation of the viral replication complex. Interacts (via N-terminus) with host VAPA. Interacts with host MAP1LC3A/LC3; this interaction does not seem to be linked to host autophagy, but rather plays a role in the formation of viral factories. Homooligomer. Interacts with NS1-2; this interaction increases the proapoptotic activity of the NTPase and is crucial for the formation of the viral replication complex. Interacts with NS4; this interaction increases the proapoptotic activity of the NTPase. In terms of assembly, homodimer. Monomer; in solution. As to quaternary structure, interacts with NTPase; this interaction increases the proapoptotic activity of the NTPase. Interacts with NS1-2; this interaction is crucial for the formation of the viral replication complex. Monomer. Interacts with the RNA-directed RNA polymerase; this interaction induces the multimerization of the RdRp and enhances its activity. Interacts with host IEF4G1; this interaction plays a role in translation of viral proteins. In terms of assembly, homohexamer; also forms fibrous hexameric oligomer. Interacts with the viral genome-linked protein; this interaction induces the multimerization of the RdRp and enhances its activity. Requires Mg(2+) as cofactor. It depends on Mn(2+) as a cofactor. Specific enzymatic cleavages in vivo yield mature proteins. 3CLpro is first autocatalytically cleaved, then processes the whole polyprotein. NS1/2-3 and NS3-4 sites are cleaved rapidly and NS4-5, NS5-6, and NS6-7 sites are processed subsequently and less efficiently. Post-translationally, VPg is uridylylated by the polymerase and is covalently attached to the 5'-end of the polyadenylated genomic and subgenomic RNAs. This uridylylated form acts as a nucleotide-peptide primer for the polymerase. In terms of processing, cleaved by host CASP3/caspase 3 at 18-22 h.p.i. The cleavage allows NS1 secretion, which is essential for intestinal infection and resistance to IFN-lambda.

The protein resides in the host Golgi apparatus membrane. It is found in the secreted. The protein localises to the host endoplasmic reticulum membrane. It localises to the host cytoplasm. Its subcellular location is the host perinuclear region. The catalysed reaction is a ribonucleoside 5'-triphosphate + H2O = a ribonucleoside 5'-diphosphate + phosphate + H(+). It catalyses the reaction Endopeptidase with a preference for cleavage when the P1 position is occupied by Glu-|-Xaa and the P1' position is occupied by Gly-|-Yaa.. It carries out the reaction RNA(n) + a ribonucleoside 5'-triphosphate = RNA(n+1) + diphosphate. Its activity is regulated as follows. Inhibited by the chemical compound K36/GC376, which covalently binds to the nucleophilic cysteine residue. Inhibited by various macrocyclic inhibitors. Inhibited by the guanidine salt GuHCl. Functionally, induces the proliferation of the host smooth ER membranes forming long tubular structures. These remodeled membranes probably form the viral factories that contain the replication complex. Induces the disassembly of host Golgi. May play a role in viral replication by interacting with host VAPA, a vesicle-associated membrane protein that plays a role in SNARE-mediated vesicle fusion. This interaction may target replication complex to intracellular membranes. In terms of biological role, displays NTPase activity and RNA helix-unwinding activity. Displays RNA chaperone-like activity and destabilizes dsRNA. Induces the formation of convoluted membranes derived from the host ER. These remodeled membranes probably form the viral factories that contain the replication complex. Initiates host cell death by targeting the mitochondrial outer membrane, leading to the permeabilization of mitochondria, programmed host cell death and viral egress. Probably plays a role in preventing the assembly of host stress granules. Probable key protein responsible for the formation of membrane alterations by the virus. Induces the formation of convoluted membranes derived from the host ER. These remodeled membranes probably form the viral factories that contain the replication complex. May play a role in targeting replication complex to intracellular membranes. Induces the disassembly of host Golgi and antagonism of Golgi-dependent cellular protein secretion, probably via the mislocalization of COPII-coated vesicles. Its function is as follows. Viral genome-linked protein is covalently linked to the 5'-end of the positive-strand, negative-strand genomic RNAs and subgenomic RNA. Acts as a genome-linked replication primer. May recruit ribosome to viral RNA thereby promoting viral proteins translation. Interacts with host translation initiation complex to allow the translation of viral proteins. Induces the formation of aggregates of RNA-directed RNA polymerase in the presence of RNA. Through its interaction with the viral RNA-directed RNA polymerase, plays a crucial role in enhancing the polymerase activity. Functionally, processes the polyprotein. 3CLpro-RdRp is first released by autocleavage, then all other proteins are cleaved. May cleave host polyadenylate-binding protein thereby inhibiting cellular translation. In terms of biological role, replicates genomic and antigenomic RNA by recognizing replications specific signals. Also transcribes a subgenomic mRNA by initiating RNA synthesis internally on antigenomic RNA. This sgRNA codes for structural proteins. Catalyzes the covalent attachment VPg with viral RNAs. The polypeptide is Genome polyprotein (Norovirus (strain Human/NoV/United States/Norwalk/1968/GI) (Hu/NV/NV/1968/US)).